A 94-amino-acid chain; its full sequence is DNA-directed RNA polymerase subunit omega (94 aa).

It belongs to the RNA polymerase subunit omega family. As to quaternary structure, the RNAP catalytic core consists of 2 alpha, 1 beta, 1 beta' and 1 omega subunit. When a sigma factor is associated with the core the holoenzyme is formed, which can initiate transcription.

It catalyses the reaction RNA(n) + a ribonucleoside 5'-triphosphate = RNA(n+1) + diphosphate. Its function is as follows. Promotes RNA polymerase assembly. Latches the N- and C-terminal regions of the beta' subunit thereby facilitating its interaction with the beta and alpha subunits. In Bifidobacterium longum subsp. infantis (strain ATCC 15697 / DSM 20088 / JCM 1222 / NCTC 11817 / S12), this protein is DNA-directed RNA polymerase subunit omega.